Here is a 551-residue protein sequence, read N- to C-terminus: CTP synthase (551 aa).

The segment at 1–267 (MSGTKYIFVT…DALVLEKLGL (267 aa)) is amidoligase domain. Ser-15 contacts CTP. Ser-15 contributes to the UTP binding site. 16 to 21 (SIGKGT) contributes to the ATP binding site. Residue Tyr-56 coordinates L-glutamine. Residue Asp-73 participates in ATP binding. Residues Asp-73 and Glu-141 each contribute to the Mg(2+) site. CTP contacts are provided by residues 148 to 150 (DIE), 188 to 193 (KTKPTQ), and Lys-224. UTP-binding positions include 188–193 (KTKPTQ) and Lys-224. Residues 292–534 (RVAVIGKYIR…VGACLGAAEE (243 aa)) enclose the Glutamine amidotransferase type-1 domain. Gly-355 is an L-glutamine binding site. Cys-382 functions as the Nucleophile; for glutamine hydrolysis in the catalytic mechanism. Residues 383–386 (LGMQ), Glu-406, and Arg-462 contribute to the L-glutamine site. Residues His-507 and Glu-509 contribute to the active site.

It belongs to the CTP synthase family. As to quaternary structure, homotetramer.

The enzyme catalyses UTP + L-glutamine + ATP + H2O = CTP + L-glutamate + ADP + phosphate + 2 H(+). The catalysed reaction is L-glutamine + H2O = L-glutamate + NH4(+). It catalyses the reaction UTP + NH4(+) + ATP = CTP + ADP + phosphate + 2 H(+). The protein operates within pyrimidine metabolism; CTP biosynthesis via de novo pathway; CTP from UDP: step 2/2. Allosterically activated by GTP, when glutamine is the substrate; GTP has no effect on the reaction when ammonia is the substrate. The allosteric effector GTP functions by stabilizing the protein conformation that binds the tetrahedral intermediate(s) formed during glutamine hydrolysis. Inhibited by the product CTP, via allosteric rather than competitive inhibition. Functionally, catalyzes the ATP-dependent amination of UTP to CTP with either L-glutamine or ammonia as the source of nitrogen. Regulates intracellular CTP levels through interactions with the four ribonucleotide triphosphates. The sequence is that of CTP synthase from Rubrobacter xylanophilus (strain DSM 9941 / JCM 11954 / NBRC 16129 / PRD-1).